Reading from the N-terminus, the 390-residue chain is MDTFLFTSESVNEGHPDKLCDQVSDAILDACLAQDPESKVACETCSKTNMVMVFGEITTKANVDYEKIVRDTCRGIGFTSADVGLDADNCKVLVNIEQQSPDIAQGVHGHLTKKPEEIGAGDQGHMFGYATDETPELMPLTHVLATKLGAKLTEVRKNKTCPWLRPDGKTQVTVEYKNEGGAMVPIRVHTILISTQHDENVTNEQIAADLKEHVIKPVIPVQYLDDKTIFHLNPSGRFVIGGPHGDAGLTGRKIIIDTYGGWGAHGGGAFSGKDPTKVDRSGAYIVRQAAKSVVASGLARRCIVQVSYAIGVPEPLSVFVDTYKTGKIPDRDILELIKENFDFRPGMIAINLDLMRGGNSRYQKTAAYGHFGRDDPDFTWETVKLLKPNA.

A Mg(2+)-binding site is contributed by E9. H15 is a binding site for ATP. E43 lines the K(+) pocket. Residues E56 and Q99 each contribute to the L-methionine site. ATP contacts are provided by residues 167-169 (DGK), 235-238 (SGRF), D246, 252-253 (RK), A269, K273, and K277. D246 contacts L-methionine. K277 lines the L-methionine pocket.

This sequence belongs to the AdoMet synthase family. Homotetramer. Mn(2+) serves as cofactor. Mg(2+) is required as a cofactor. Requires Co(2+) as cofactor. It depends on K(+) as a cofactor.

Its subcellular location is the cytoplasm. The catalysed reaction is L-methionine + ATP + H2O = S-adenosyl-L-methionine + phosphate + diphosphate. Its pathway is amino-acid biosynthesis; S-adenosyl-L-methionine biosynthesis; S-adenosyl-L-methionine from L-methionine: step 1/1. Catalyzes the formation of S-adenosylmethionine from methionine and ATP. The reaction comprises two steps that are both catalyzed by the same enzyme: formation of S-adenosylmethionine (AdoMet) and triphosphate, and subsequent hydrolysis of the triphosphate. This Populus trichocarpa (Western balsam poplar) protein is S-adenosylmethionine synthase 4 (METK4).